The chain runs to 385 residues: DnaJ homolog subfamily C member 28 (385 aa).

The J domain maps to 48-132 (EYYRLLNLDE…EGKFKYNTPQ (85 aa)). Positions 261–318 (KEIKDTIEQLREALLMSRKKLGNPLSPTEQKQWAQVCEQFQEKIRKLNKRINDFNLIV) form a coiled coil.

May have a role in protein folding or as a chaperone. In Mus musculus (Mouse), this protein is DnaJ homolog subfamily C member 28 (Dnajc28).